The following is a 300-amino-acid chain: CDAN1-interacting nuclease 1 (300 aa).

The protein localises to the nucleus. It is found in the cytoplasm. In terms of biological role, may play a role in erythroid cell differentiation. The sequence is that of CDAN1-interacting nuclease 1 (cdin1) from Danio rerio (Zebrafish).